Consider the following 151-residue polypeptide: UPAR/Ly6 domain-containing protein crok (151 aa).

Positions 1–23 are cleaved as a signal peptide; the sequence is MKTLEKYILFAIVLCCLLQLGQA. The Lumenal segment spans residues 24–128; it reads IKCWDCRSDN…KDGCNSAGIH (105 aa). Cystine bridges form between Cys26–Cys68, Cys29–Cys37, Cys51–Cys85, Cys100–Cys114, and Cys116–Cys122. An N-linked (GlcNAc...) asparagine glycan is attached at Asn43. A lipid anchor (GPI-anchor amidated serine) is attached at Ser124. A propeptide spans 125 to 151 (removed in mature form); it reads AGIHRLGLMGVLTGTLLSVIVAHLLRQ. The helical transmembrane segment at 129–149 threads the bilayer; it reads RLGLMGVLTGTLLSVIVAHLL. Residues 150–151 lie on the Cytoplasmic side of the membrane; the sequence is RQ.

It belongs to the quiver family.

It is found in the vesicle. The protein localises to the membrane. The protein resides in the endomembrane system. Required for septate junction assembly, possibly by organizing the preassembly and transport of septate junction proteins including dlg1/disks large 1 and Nrx-IV/Neurexin-IV. Involved in paracellular barrier functions of trachea, hindgut and salivary gland mediated by epithelial cell septate junctions. The protein is UPAR/Ly6 domain-containing protein crok of Drosophila melanogaster (Fruit fly).